We begin with the raw amino-acid sequence, 162 residues long: CASP-like protein 1C2 (162 aa).

The Cytoplasmic portion of the chain corresponds to 1–6; the sequence is MMKPKR. A helical transmembrane segment spans residues 7–27; that stretch reads LLSLLLRLIAVGATLAAVIIM. Residues 28–49 lie on the Extracellular side of the membrane; that stretch reads ATSHEKGTFFAVSYEAKYTDTP. A helical membrane pass occupies residues 50–70; the sequence is AFKYFVIANAIVTVYGFLVLF. Topologically, residues 71 to 79 are cytoplasmic; sequence HPPGSPLWR. A helical membrane pass occupies residues 80–100; it reads LVLALDLVFTMLLISSISAAL. The Extracellular segment spans residues 101–130; that stretch reads AVAQVGKNGNSRAGWLPVCGQVTKYCNQVT. A helical membrane pass occupies residues 131-151; the sequence is GALVAGLIALITYIILLLHSI. The Cytoplasmic portion of the chain corresponds to 152 to 162; sequence YTFLNPLLEKA.

The protein belongs to the Casparian strip membrane proteins (CASP) family. As to quaternary structure, homodimer and heterodimers.

It localises to the cell membrane. The protein is CASP-like protein 1C2 of Populus trichocarpa (Western balsam poplar).